Consider the following 124-residue polypeptide: Putative outer membrane protein TC_0858 (124 aa).

Residues 1–31 (MGKTKKRKQSITLIEMMVVITLIGIISGALA) form the signal peptide.

The protein resides in the cell outer membrane. The polypeptide is Putative outer membrane protein TC_0858 (Chlamydia muridarum (strain MoPn / Nigg)).